The following is a 278-amino-acid chain: UPF0761 membrane protein NT05HA_1801 (278 aa).

The next 6 membrane-spanning stretches (helical) occupy residues 32 to 52 (MLAI…FPVF), 88 to 108 (QMSA…INSI), 123 to 143 (PIFT…LLVG), 168 to 188 (LLSF…YMVV), 203 to 223 (LIAA…IVTF), and 232 to 252 (AMAT…FVLL).

Belongs to the UPF0761 family.

Its subcellular location is the cell inner membrane. The chain is UPF0761 membrane protein NT05HA_1801 from Aggregatibacter aphrophilus (strain NJ8700) (Haemophilus aphrophilus).